The following is a 124-amino-acid chain: UPF0482 protein YPK_1977 (124 aa).

The first 32 residues, 1–32 (MMKINNLPRLIRAFLPATLLMLPLVWQTPALA), serve as a signal peptide directing secretion. The disordered stretch occupies residues 47–69 (GGNNDPMSKEQARQSQQQWDETN).

Belongs to the UPF0482 family.

The polypeptide is UPF0482 protein YPK_1977 (Yersinia pseudotuberculosis serotype O:3 (strain YPIII)).